Consider the following 1237-residue polypeptide: Zinc finger protein 687 (1237 aa).

Disordered stretches follow at residues 1–80 and 96–330; these read MGDM…PDIS and EALA…PLKV. Over residues 97–111 the composition is skewed to low complexity; that stretch reads ALAGGSAGDGAQAAG. Ser102, Ser129, and Ser140 each carry phosphoserine. Residues 132-144 are compositionally biased toward pro residues; sequence PSLPGTPHSPAPP. The residue at position 148 (Thr148) is a Phosphothreonine. Phosphoserine is present on residues Ser227, Ser242, Ser251, Ser253, Ser266, and Ser271. The segment covering 234-244 has biased composition (polar residues); it reads LAQQGSGSSPK. Residue Lys285 forms a Glycyl lysine isopeptide (Lys-Gly) (interchain with G-Cter in SUMO2) linkage. Residues 297-310 are compositionally biased toward low complexity; it reads SSPGSPQSPSSGAE. Residues Lys336 and Lys372 each participate in a glycyl lysine isopeptide (Lys-Gly) (interchain with G-Cter in SUMO2) cross-link. Position 374 is a phosphoserine (Ser374). At Thr377 the chain carries Phosphothreonine. Glycyl lysine isopeptide (Lys-Gly) (interchain with G-Cter in SUMO2) cross-links involve residues Lys384, Lys397, and Lys422. A Phosphoserine modification is found at Ser433. Glycyl lysine isopeptide (Lys-Gly) (interchain with G-Cter in SUMO2) cross-links involve residues Lys435, Lys439, Lys451, and Lys464. Ser495 carries the post-translational modification Phosphoserine. The C2H2-type 1; degenerate zinc finger occupies 533 to 552; the sequence is YRCLECGDAFSLEKSLARHY. 5 consecutive C2H2-type zinc fingers follow at residues 705–727, 764–787, 792–815, 827–849, and 858–881; these read NVCPTCPMMLPNRCSFSAHQRMH, YRCPSCSVVFGGVNSIKSHIQTSH, HKCPICPMAFKSGPSAHAHLYSQH, YKCAMCDTVFTHKPLLSSHFDQH, and FKCPSCPLLFAQKRTMLEHLKNTH. Positions 880–890 are enriched in basic and acidic residues; it reads THQSGRLEETA. Residues 880 to 957 are disordered; it reads THQSGRLEET…LGSKGLKGGG (78 aa). Thr900 is modified (phosphothreonine). A compositionally biased stretch (low complexity) spans 915 to 925; that stretch reads AAPATEESSSS. Residue Lys954 forms a Glycyl lysine isopeptide (Lys-Gly) (interchain with G-Cter in SUMO2) linkage. 2 consecutive C2H2-type zinc fingers follow at residues 963–986 and 993–1016; these read WTCGLCHSWFPERDEYVAHMKKEH and FPCRLCERSFCSAPSLRRHVRVNH. A Glycyl lysine isopeptide (Lys-Gly) (interchain with G-Cter in SUMO2) cross-link involves residue Lys1043. Residues 1051–1121 form a disordered region; that stretch reads LQLGAQSPGR…LRYRSSSSTE (71 aa). A Phosphoserine modification is found at Ser1057. At Arg1060 the chain carries Omega-N-methylarginine. Residues Ser1082, Ser1083, and Ser1085 each carry the phosphoserine modification. The residue at position 1101 (Arg1101) is an Omega-N-methylarginine. 2 positions are modified to phosphoserine: Ser1106 and Ser1118. The C2H2-type 9 zinc-finger motif lies at 1135–1158; that stretch reads QQCLDCGLCFASPGSLSRHRFISH. The disordered stretch occupies residues 1159-1195; it reads KKRRGVGKASALGLGDGEEEAPPSRSDPDGGDSPLPA. 3 positions are modified to phosphoserine: Ser1184, Ser1191, and Ser1211. The C2H2-type 10 zinc-finger motif lies at 1200–1222; that stretch reads LTCKVCGKSCDSPLNLKTHFRTH.

It belongs to the krueppel C2H2-type zinc-finger protein family. In terms of assembly, interacts with ZMYND8. In terms of tissue distribution, widely expressed with highest levels in obvary, muscle, blood and lung.

It is found in the cytoplasm. Its subcellular location is the nucleus. May be involved in transcriptional regulation. The polypeptide is Zinc finger protein 687 (ZNF687) (Homo sapiens (Human)).